A 117-amino-acid polypeptide reads, in one-letter code: Large ribosomal subunit protein bL19 (117 aa).

The protein belongs to the bacterial ribosomal protein bL19 family.

Functionally, this protein is located at the 30S-50S ribosomal subunit interface and may play a role in the structure and function of the aminoacyl-tRNA binding site. The protein is Large ribosomal subunit protein bL19 of Alkalilimnicola ehrlichii (strain ATCC BAA-1101 / DSM 17681 / MLHE-1).